Here is a 688-residue protein sequence, read N- to C-terminus: Sodium channel and clathrin linker 1 (688 aa).

N-acetylalanine is present on alanine 2. A coiled-coil region spans residues 69-673 (ELNGQLKYYQ…SASQQLSVIT (605 aa)). A Phosphoserine modification is found at serine 681.

In terms of assembly, interacts with SCN10A and clathrin. Identified in a complex containing SCN10A, clathrin and SCLT1.

It localises to the cytoplasm. Its subcellular location is the cytoskeleton. The protein resides in the microtubule organizing center. It is found in the centrosome. The protein localises to the centriole. Its function is as follows. Adapter protein that links SCN10A to clathrin. Regulates SCN10A channel activity, possibly by promoting channel internalization. The sequence is that of Sodium channel and clathrin linker 1 (SCLT1) from Homo sapiens (Human).